Consider the following 297-residue polypeptide: 33 kDa chaperonin (297 aa).

Disulfide bonds link Cys-232–Cys-234 and Cys-266–Cys-269.

The protein belongs to the HSP33 family. Under oxidizing conditions two disulfide bonds are formed involving the reactive cysteines. Under reducing conditions zinc is bound to the reactive cysteines and the protein is inactive.

Its subcellular location is the cytoplasm. Redox regulated molecular chaperone. Protects both thermally unfolding and oxidatively damaged proteins from irreversible aggregation. Plays an important role in the bacterial defense system toward oxidative stress. This chain is 33 kDa chaperonin, found in Azotobacter vinelandii (strain DJ / ATCC BAA-1303).